The following is a 497-amino-acid chain: Cysteine--tRNA ligase (497 aa).

Residue Cys46 participates in Zn(2+) binding. The 'HIGH' region motif lies at 48 to 58 (PTVYSDAHLGH). Zn(2+) is bound by residues Cys237, His262, and Glu266. A 'KMSKS' region motif is present at residues 293 to 297 (KMSKS). An ATP-binding site is contributed by Lys296.

The protein belongs to the class-I aminoacyl-tRNA synthetase family. In terms of assembly, monomer. It depends on Zn(2+) as a cofactor.

Its subcellular location is the cytoplasm. The catalysed reaction is tRNA(Cys) + L-cysteine + ATP = L-cysteinyl-tRNA(Cys) + AMP + diphosphate. The chain is Cysteine--tRNA ligase from Deinococcus geothermalis (strain DSM 11300 / CIP 105573 / AG-3a).